Consider the following 391-residue polypeptide: Putative B3 domain-containing protein Os08g0325100 (391 aa).

Positions 32-125 (GDFQHEIRGE…QFDVIIFDQV (94 aa)) form a DNA-binding region, TF-B3. Positions 143 to 232 (VQEGRTDATE…SSRAHPQPMP (90 aa)) are disordered. Positions 172 to 226 (EGRTNATETLNSSRAHSQPMPMQTPATETLNSSRAHSQDMPMQSPATETLNSSRA) are enriched in polar residues.

It localises to the nucleus. This chain is Putative B3 domain-containing protein Os08g0325100, found in Oryza sativa subsp. japonica (Rice).